A 346-amino-acid polypeptide reads, in one-letter code: MTSLCLTIAPAVLSLICLSSYGWAEDNNGIHTLDDGDNDPFFRHNRQFYRFGRAFVPLWDNADDSLVRKNLLTHWSEFPLSPALSSSDVFSRNSRQFYRFGRSYPPYQDKRFLRFGRSHQPDIDEYLQALNSDQALYRKRRSEDGDSKEDGLNRVARSADANQQSKNTQSNKFGKDLQKRETKKEKLNANDDLEILSNEDDLEKKFMRFGKRFMRFGRGDEDESYDKRFMRFGKSLRHDQEFEKRFMRFGKRFMRFGRGDEDDAREEKRFLRFGKSSNEDEDIKKRFMRFGKSGNEDGDVDKRFMRFGKRFMRFGKSEKEDGDVDKRFMRFGKRFMRFGRGDSETS.

A signal peptide spans 1-19 (MTSLCLTIAPAVLSLICLS). Residues 20–45 (SYGWAEDNNGIHTLDDGDNDPFFRHN) constitute a propeptide that is removed on maturation. Phe51 bears the Phenylalanine amide mark. Residues 54 to 94 (AFVPLWDNADDSLVRKNLLTHWSEFPLSPALSSSDVFSRNS) constitute a propeptide that is removed on maturation. Phe100 is subject to Phenylalanine amide. Residues 103–109 (SYPPYQD) constitute a propeptide that is removed on maturation. A Phenylalanine amide modification is found at Phe115. Positions 118–203 (SHQPDIDEYL…EILSNEDDLE (86 aa)) are excised as a propeptide. Positions 137 to 185 (YRKRRSEDGDSKEDGLNRVARSADANQQSKNTQSNKFGKDLQKRETKKE) are disordered. Residues 141–152 (RSEDGDSKEDGL) are compositionally biased toward basic and acidic residues. Residues 160–172 (DANQQSKNTQSNK) are compositionally biased toward polar residues. Residues 173–185 (FGKDLQKRETKKE) are compositionally biased toward basic and acidic residues. Phe209 and Phe216 each carry phenylalanine amide. The propeptide occupies 219–226 (GDEDESYD). At Phe232 the chain carries Phenylalanine amide. A propeptide spanning residues 235–243 (SLRHDQEFE) is cleaved from the precursor. Residues Phe249 and Phe256 each carry the phenylalanine amide modification. Positions 259–267 (GDEDDAREE) are excised as a propeptide. Phe273 carries the phenylalanine amide modification. Positions 276-283 (SSNEDEDI) are excised as a propeptide. Phe290 carries the post-translational modification Phenylalanine amide. The propeptide occupies 293-301 (SGNEDGDVD). A phenylalanine amide mark is found at Phe307 and Phe314. Residues 317 to 325 (SEKEDGDVD) constitute a propeptide that is removed on maturation. Phenylalanine amide is present on residues Phe331 and Phe338. The propeptide occupies 341–346 (GDSETS).

This sequence belongs to the FARP (FMRFamide related peptide) family. As to expression, central nervous system.

Its subcellular location is the secreted. Can function as both cardioregulatory hormones and transmitters and may regulate cardiovascular function. This is FMRFamide-related peptides type HF-1 from Cornu aspersum (Brown garden snail).